The chain runs to 668 residues: Ecdysone oxidase (668 aa).

FAD-binding positions include 137-140 (NHMV), valine 270, and 536-537 (WH). Residue histidine 537 is the Proton acceptor of the active site.

Belongs to the GMC oxidoreductase family. The cofactor is FAD.

It catalyses the reaction ecdysone + O2 = 3-dehydroecdysone + H2O2. Its function is as follows. Involved in the inactivation of ecdysteroid molting hormones by converting ecdysteroids into 3-dehydroecdysteroids. This chain is Ecdysone oxidase, found in Bombyx mori (Silk moth).